Reading from the N-terminus, the 490-residue chain is MYKQTVVIFLLCFFICVSCYEVPPAKLEAIWPKGLRVSLPDDGYSLFAFHGKLNEEMEGLEAGHWSRDITKSKGGRWTFNDKQAKLKIGDKIYFWTYVIKEGLGYRQDNGEWTVTGYVDEAGNPVAPTSQPDAVVTEPPAAITPATAIVTNPPTSQNTYPCEISVSMVSVPGFVCKGQLLFEDNFNKGIDKGNIWTTENMFPGEPDYPFNVYLYDNVHVRDGKLIITPTTLESKYGEDYVRQQLDLTQRCTGTIGTADCTRVASGPIILPPVITSKINTKNRFSFKYGRVEVRARMPTGDWLIPEILLEPRDRIYGIHSYASGLLRVACVKGNVEYSKTLYGGPILCDSEPYRNVNLKQKIGFDHWNKDFHNYTLEWRPDGISLFVDGEKYGDVTPPTDGFYGDAKKENVQAASQWLKGTSMAPLDDYFYISIGLDVGGVHEFPDSSTKPWQNKATKAMLNFWNNRDQWFPTWFKDTSSLQVDYVRVYAL.

A signal peptide spans 1–19; that stretch reads MYKQTVVIFLLCFFICVSC. Positions 20-119 constitute a CBM39 domain; sequence YEVPPAKLEA…GEWTVTGYVD (100 aa). A GH16 domain is found at 152-490; it reads PPTSQNTYPC…QVDYVRVYAL (339 aa). An N-linked (GlcNAc...) asparagine glycan is attached at asparagine 372.

This sequence belongs to the insect beta-1,3-glucan binding protein family. As to quaternary structure, monomer. Hemolymph.

The protein resides in the secreted. In terms of biological role, plays a role in the recognition of invading microorganisms activating the phenoloxidase cascade. Binds specifically to beta-1,3-glucan. Binds the Aspergillus niger cell wall component alpha-1,3-glucan, a fungal pathogen-associated molecular pattern (PAMP) that activates the host immune response. The polypeptide is Beta-1,3-glucan-binding protein 1 (Galleria mellonella (Greater wax moth)).